The chain runs to 620 residues: 1-deoxy-D-xylulose-5-phosphate synthase (620 aa).

Thiamine diphosphate-binding positions include H80 and 121–123 (GHS). D152 contacts Mg(2+). Thiamine diphosphate-binding positions include 153–154 (GA), N181, Y288, and E370. Residue N181 coordinates Mg(2+).

This sequence belongs to the transketolase family. DXPS subfamily. Homodimer. The cofactor is Mg(2+). It depends on thiamine diphosphate as a cofactor.

It catalyses the reaction D-glyceraldehyde 3-phosphate + pyruvate + H(+) = 1-deoxy-D-xylulose 5-phosphate + CO2. The protein operates within metabolic intermediate biosynthesis; 1-deoxy-D-xylulose 5-phosphate biosynthesis; 1-deoxy-D-xylulose 5-phosphate from D-glyceraldehyde 3-phosphate and pyruvate: step 1/1. Its function is as follows. Catalyzes the acyloin condensation reaction between C atoms 2 and 3 of pyruvate and glyceraldehyde 3-phosphate to yield 1-deoxy-D-xylulose-5-phosphate (DXP). The chain is 1-deoxy-D-xylulose-5-phosphate synthase from Citrobacter koseri (strain ATCC BAA-895 / CDC 4225-83 / SGSC4696).